We begin with the raw amino-acid sequence, 491 residues long: Ketol-acid reductoisomerase (NADP(+)) (491 aa).

Residues 15–208 (AQLGTCRFME…GGHRAGVLES (194 aa)) form the KARI N-terminal Rossmann domain. NADP(+) is bound by residues 45–48 (CGAQ), Arg68, Arg76, Ser78, and 108–110 (DKQ). Residue His132 is part of the active site. Residue Gly158 participates in NADP(+) binding. KARI C-terminal knotted domains follow at residues 209 to 353 (SFVA…KEQE) and 354 to 486 (YFDK…MTAM). 4 residues coordinate Mg(2+): Asp217, Glu221, Glu389, and Glu393. Ser414 is a substrate binding site.

Belongs to the ketol-acid reductoisomerase family. The cofactor is Mg(2+).

The catalysed reaction is (2R)-2,3-dihydroxy-3-methylbutanoate + NADP(+) = (2S)-2-acetolactate + NADPH + H(+). It carries out the reaction (2R,3R)-2,3-dihydroxy-3-methylpentanoate + NADP(+) = (S)-2-ethyl-2-hydroxy-3-oxobutanoate + NADPH + H(+). The protein operates within amino-acid biosynthesis; L-isoleucine biosynthesis; L-isoleucine from 2-oxobutanoate: step 2/4. Its pathway is amino-acid biosynthesis; L-valine biosynthesis; L-valine from pyruvate: step 2/4. Its function is as follows. Involved in the biosynthesis of branched-chain amino acids (BCAA). Catalyzes an alkyl-migration followed by a ketol-acid reduction of (S)-2-acetolactate (S2AL) to yield (R)-2,3-dihydroxy-isovalerate. In the isomerase reaction, S2AL is rearranged via a Mg-dependent methyl migration to produce 3-hydroxy-3-methyl-2-ketobutyrate (HMKB). In the reductase reaction, this 2-ketoacid undergoes a metal-dependent reduction by NADPH to yield (R)-2,3-dihydroxy-isovalerate. This Christiangramia forsetii (strain DSM 17595 / CGMCC 1.15422 / KT0803) (Gramella forsetii) protein is Ketol-acid reductoisomerase (NADP(+)).